Here is a 179-residue protein sequence, read N- to C-terminus: Large ribosomal subunit protein uL5 (179 aa).

Belongs to the universal ribosomal protein uL5 family. In terms of assembly, part of the 50S ribosomal subunit; part of the 5S rRNA/L5/L18/L25 subcomplex. Contacts the 5S rRNA and the P site tRNA. Forms a bridge to the 30S subunit in the 70S ribosome.

This is one of the proteins that bind and probably mediate the attachment of the 5S RNA into the large ribosomal subunit, where it forms part of the central protuberance. In the 70S ribosome it contacts protein S13 of the 30S subunit (bridge B1b), connecting the 2 subunits; this bridge is implicated in subunit movement. Contacts the P site tRNA; the 5S rRNA and some of its associated proteins might help stabilize positioning of ribosome-bound tRNAs. This Francisella tularensis subsp. tularensis (strain SCHU S4 / Schu 4) protein is Large ribosomal subunit protein uL5.